A 630-amino-acid polypeptide reads, in one-letter code: Putative polypeptide N-acetylgalactosaminyltransferase 10 (630 aa).

Topologically, residues 1-6 are cytoplasmic; it reads MNVDLR. Residues 7 to 26 form a helical; Signal-anchor for type II membrane protein membrane-spanning segment; it reads LIVRLLLAILLTSLVTTILM. Residues 27–630 lie on the Lumenal side of the membrane; the sequence is GKQIHRRLVK…APYDPQREPH (604 aa). 4 N-linked (GlcNAc...) asparagine glycosylation sites follow: Asn72, Asn84, Asn146, and Asn168. Intrachain disulfides connect Cys157-Cys386, Cys377-Cys456, and Cys496-Cys513. The tract at residues 166 to 277 is catalytic subdomain A; sequence LPNVTVIIAF…TNWLPPLLEP (112 aa). The substrate site is built by Asp207 and Arg238. Asp261 lines the Mn(2+) pocket. A substrate-binding site is contributed by Ser262. His263 is a Mn(2+) binding site. The tract at residues 333–394 is catalytic subdomain B; it reads PYRTPVLSGA…PCARVGHIGK (62 aa). Position 363 (Trp363) interacts with substrate. Mn(2+) is bound at residue His391. The 136-residue stretch at 483–618 folds into the Ricin B-type lectin domain; sequence FSGVIESVAF…NQLEQQWKVG (136 aa). A glycan (N-linked (GlcNAc...) asparagine) is linked at Asn525. Cystine bridges form between Cys543/Cys559 and Cys586/Cys606.

Belongs to the glycosyltransferase 2 family. GalNAc-T subfamily. Mn(2+) serves as cofactor. As to expression, during embryonic stages 9-11, weakly expressed in the mesoderm. During embryonic stages 12-13, very weak expression is observed in the somatic mesoderm region. No expression detected from stage 14-15. During embryonic stages 16-17, expressed in the epidermis and the antennomaxillary complex. In third instar larvae, expressed ubiquitously in wing, eye-antennal, leg and haltere imaginal disks.

It is found in the golgi apparatus membrane. The catalysed reaction is L-seryl-[protein] + UDP-N-acetyl-alpha-D-galactosamine = a 3-O-[N-acetyl-alpha-D-galactosaminyl]-L-seryl-[protein] + UDP + H(+). It catalyses the reaction L-threonyl-[protein] + UDP-N-acetyl-alpha-D-galactosamine = a 3-O-[N-acetyl-alpha-D-galactosaminyl]-L-threonyl-[protein] + UDP + H(+). It participates in protein modification; protein glycosylation. Functionally, may catalyze the initial reaction in O-linked oligosaccharide biosynthesis, the transfer of an N-acetyl-D-galactosamine residue to a serine or threonine residue on the protein receptor. This Drosophila melanogaster (Fruit fly) protein is Putative polypeptide N-acetylgalactosaminyltransferase 10 (pgant10).